The chain runs to 498 residues: Glycerol kinase (498 aa).

T12 is a binding site for ADP. Positions 12, 13, and 14 each coordinate ATP. T12 is a binding site for sn-glycerol 3-phosphate. R16 serves as a coordination point for ADP. Residues R82, E83, Y134, and D244 each contribute to the sn-glycerol 3-phosphate site. R82, E83, Y134, D244, and Q245 together coordinate glycerol. ADP is bound by residues T266 and G310. Positions 266, 310, 314, and 411 each coordinate ATP. Positions 411 and 415 each coordinate ADP.

This sequence belongs to the FGGY kinase family.

The enzyme catalyses glycerol + ATP = sn-glycerol 3-phosphate + ADP + H(+). Its pathway is polyol metabolism; glycerol degradation via glycerol kinase pathway; sn-glycerol 3-phosphate from glycerol: step 1/1. With respect to regulation, inhibited by fructose 1,6-bisphosphate (FBP). Key enzyme in the regulation of glycerol uptake and metabolism. Catalyzes the phosphorylation of glycerol to yield sn-glycerol 3-phosphate. The sequence is that of Glycerol kinase from Chloroflexus aurantiacus (strain ATCC 29364 / DSM 637 / Y-400-fl).